Reading from the N-terminus, the 892-residue chain is Transposase for transposon Tn4556 (892 aa).

Positions 1 to 12 (MGGRAGLDDGRG) are enriched in basic and acidic residues. The segment at 1 to 63 (MGGRAGLDDG…GQPARDAEHR (63 aa)) is disordered. The segment covering 23–34 (VAEGAAGAAAWG) has biased composition (low complexity).

Belongs to the transposase 7 family.

Functionally, required for transposition of transposon Tn4556. This Streptomyces fradiae (Streptomyces roseoflavus) protein is Transposase for transposon Tn4556 (tnpA).